Consider the following 397-residue polypeptide: Lysophospholipid transporter LplT (397 aa).

Residues 1–17 lie on the Periplasmic side of the membrane; sequence MSESVHTNTSLWSKGMK. A helical transmembrane segment spans residues 18-38; the sequence is AVIVAQFLSAFGDNALLFATL. At 39-52 the chain is on the cytoplasmic side; that stretch reads ALLNAQFYPEWSQP. Residues 53 to 73 form a helical membrane-spanning segment; that stretch reads ILQMVFVGAYILFAPFVGQVA. The Periplasmic portion of the chain corresponds to 74–90; sequence DSFAKGRVMMFANGLKL. A helical transmembrane segment spans residues 91 to 111; that stretch reads LGAASICFGINPFLGYTLVGV. The Cytoplasmic portion of the chain corresponds to 112–144; sequence GAAAYSPAKYGILGELTTGSKLVKANGLMEAST. The helical transmembrane segment at 145–165 threads the bilayer; it reads IAAILLGSVAGGVLADWHVLV. A topological domain (periplasmic) is located at residue A166. The helical transmembrane segment at 167–187 threads the bilayer; it reads LAACALAYGGAVVANIYIPKL. Residues 188-226 lie on the Cytoplasmic side of the membrane; that stretch reads AAARPGQSWNLINMTRSFLNACTSLWRNGETRFSLVGTS. A helical membrane pass occupies residues 227–247; sequence LFWGAGVTLRFLLVLWVPVAL. At 248–256 the chain is on the periplasmic side; the sequence is GITDNATPT. Residues 257–277 form a helical membrane-spanning segment; the sequence is YLNAMVAIGIVVGAGAAAKLV. The Cytoplasmic segment spans residues 278–280; the sequence is TLE. A helical transmembrane segment spans residues 281 to 301; that stretch reads TVSRCMPAGILIGVVVLIFSL. At 302 to 304 the chain is on the periplasmic side; the sequence is QHE. The chain crosses the membrane as a helical span at residues 305–325; sequence LLPAYALLMLIGVMGGFFVVP. Over 326–343 the chain is Cytoplasmic; that stretch reads LNALLQERGKKSVGAGNA. Residues 344–364 traverse the membrane as a helical segment; the sequence is IAVQNLGENSAMLLMLGIYSL. Residues 365-366 lie on the Periplasmic side of the membrane; it reads AV. Residues 367–387 form a helical membrane-spanning segment; that stretch reads MIGIPVVPIGIGFGALFALAI. Topologically, residues 388–397 are cytoplasmic; that stretch reads TALWIWQRRH.

It belongs to the major facilitator superfamily. LplT (TC 2.A.1.42) family.

The protein localises to the cell inner membrane. Functionally, catalyzes the facilitated diffusion of 2-acyl-glycero-3-phosphoethanolamine (2-acyl-GPE) into the cell. The protein is Lysophospholipid transporter LplT of Escherichia coli (strain SE11).